Here is a 124-residue protein sequence, read N- to C-terminus: Ribonuclease pancreatic (124 aa).

Substrate-binding residues include K7 and R10. The Proton acceptor role is filled by H12. Intrachain disulfides connect C26-C84, C40-C95, C58-C110, and C65-C72. An N-linked (GlcNAc...) asparagine glycan is attached at N34. Residues 41 to 45 (KPVNT), K66, and R85 contribute to the substrate site. H119 serves as the catalytic Proton donor.

The protein belongs to the pancreatic ribonuclease family. Monomer. Interacts with and forms tight 1:1 complexes with RNH1. Dimerization of two such complexes may occur. Interaction with RNH1 inhibits this protein. Pancreas.

It is found in the secreted. It carries out the reaction an [RNA] containing cytidine + H2O = an [RNA]-3'-cytidine-3'-phosphate + a 5'-hydroxy-ribonucleotide-3'-[RNA].. It catalyses the reaction an [RNA] containing uridine + H2O = an [RNA]-3'-uridine-3'-phosphate + a 5'-hydroxy-ribonucleotide-3'-[RNA].. Functionally, endonuclease that catalyzes the cleavage of RNA on the 3' side of pyrimidine nucleotides. Acts on single-stranded and double-stranded RNA. The sequence is that of Ribonuclease pancreatic (RNASE1) from Eudorcas thomsonii (Thomson's gazelle).